The primary structure comprises 529 residues: Peptide chain release factor 3 (529 aa).

A tr-type G domain is found at 11-279 (AKRRTFAIIS…GLVDWAPKPQ (269 aa)). Residues 20 to 27 (SHPDAGKT), 88 to 92 (DTPGH), and 142 to 145 (NKLD) each bind GTP.

The protein belongs to the TRAFAC class translation factor GTPase superfamily. Classic translation factor GTPase family. PrfC subfamily.

The protein localises to the cytoplasm. In terms of biological role, increases the formation of ribosomal termination complexes and stimulates activities of RF-1 and RF-2. It binds guanine nucleotides and has strong preference for UGA stop codons. It may interact directly with the ribosome. The stimulation of RF-1 and RF-2 is significantly reduced by GTP and GDP, but not by GMP. In Idiomarina loihiensis (strain ATCC BAA-735 / DSM 15497 / L2-TR), this protein is Peptide chain release factor 3.